Reading from the N-terminus, the 185-residue chain is Elongation factor P (185 aa).

Belongs to the elongation factor P family.

Its subcellular location is the cytoplasm. Its pathway is protein biosynthesis; polypeptide chain elongation. Functionally, involved in peptide bond synthesis. Stimulates efficient translation and peptide-bond synthesis on native or reconstituted 70S ribosomes in vitro. Probably functions indirectly by altering the affinity of the ribosome for aminoacyl-tRNA, thus increasing their reactivity as acceptors for peptidyl transferase. This Bacillus cereus (strain B4264) protein is Elongation factor P.